The chain runs to 320 residues: MMENLLIPPPPWVGRVDGTSSHHLRWHQAVTPLHDGAEPGACVLIGFSSDEGVERNKGRRGAARGPDALRGALSSMALAEPLRVYDAGTVAVTDNRLEAGQMALGSVVAATLDAGQFPVVLGGGHEVAYGTYLGLAQAAVRTPKRRIGILNLDAHFDLRSDPVPSSGTPFRQILEQEHASGTALQYSVLGISQPSNTTALFDTARGYDVRYLLDDDCSVSDRHRVAVFVSEFLSDVDLVYLTIDLDVLPAAVAPGVSAPAAYGVPAETIQFVCDAVAASGKLAVCDVAELNPSFDIDNRTARTAARLIHRIVTKRIPIAV.

The Mn(2+) site is built by His-125, Asp-153, His-155, Asp-157, Asp-244, and Asp-246.

It belongs to the arginase family. Mn(2+) is required as a cofactor.

The enzyme catalyses N-formimidoyl-L-glutamate + H2O = formamide + L-glutamate. Its pathway is amino-acid degradation; L-histidine degradation into L-glutamate; L-glutamate from N-formimidoyl-L-glutamate (hydrolase route): step 1/1. Catalyzes the conversion of N-formimidoyl-L-glutamate to L-glutamate and formamide. This Rhodococcus jostii (strain RHA1) protein is Formimidoylglutamase.